The following is a 139-amino-acid chain: Histone H2B (139 aa).

The span at 1-10 shows a compositional bias: basic and acidic residues; sequence MAPKAAEKKP. A disordered region spans residues 1–47; it reads MAPKAAEKKPSTGGKAPAGGKAPAEKKEAGKKTAASGEKKKRTKARK. N6-acetyllysine; alternate occurs at positions 8 and 9. Glycyl lysine isopeptide (Lys-Gly) (interchain with G-Cter in SUMO); alternate cross-links involve residues lysine 8 and lysine 9. Over residues 11–22 the composition is skewed to low complexity; it reads STGGKAPAGGKA. Lysine 15 is subject to N6-acetyllysine. At lysine 26 the chain carries N6-acetyllysine; alternate. Residue lysine 26 forms a Glycyl lysine isopeptide (Lys-Gly) (interchain with G-Cter in SUMO); alternate linkage. Lysine 27 participates in a covalent cross-link: Glycyl lysine isopeptide (Lys-Gly) (interchain with G-Cter in SUMO). Lysine 133 is covalently cross-linked (Glycyl lysine isopeptide (Lys-Gly) (interchain with G-Cter in ubiquitin)).

The protein belongs to the histone H2B family. As to quaternary structure, the nucleosome is a histone octamer containing two molecules each of H2A, H2B, H3 and H4 assembled in one H3-H4 heterotetramer and two H2A-H2B heterodimers. The octamer wraps approximately 147 bp of DNA. Post-translationally, monoubiquitinated by the UBC2-BRE1 complex to form H2BK123ub1. H2BK123ub1 gives a specific tag for epigenetic transcriptional activation and is also prerequisite for H3K4me and H3K79me formation. H2BK123ub1 also modulates the formation of double-strand breaks during meiosis and is a prerequisite for DNA-damage checkpoint activation. In terms of processing, acetylated by GCN5 to form H2BK11ac and H2BK16ac. H2BK16ac can also be formed by ESA1. Acetylation of N-terminal lysines and particularly formation of H2BK11acK16ac has a positive effect on transcription. Sumoylation to form H2BK6su or H2BK7su, and probably also H2BK16su or H2BK17su, occurs preferentially near the telomeres and represses gene transcription.

The protein localises to the nucleus. It localises to the chromosome. Functionally, core component of nucleosome. Nucleosomes wrap and compact DNA into chromatin, limiting DNA accessibility to the cellular machineries which require DNA as a template. Histones thereby play a central role in transcription regulation, DNA repair, DNA replication and chromosomal stability. DNA accessibility is regulated via a complex set of post-translational modifications of histones, also called histone code, and nucleosome remodeling. This chain is Histone H2B (HTB1), found in Coccidioides immitis (strain RS) (Valley fever fungus).